The chain runs to 65 residues: MKVKELRDLTDAELAKKIDDSKDELFKLRFQLATGQLDNPMKIKDVKRNIARLKTIETERKLGIR.

It belongs to the universal ribosomal protein uL29 family.

The sequence is that of Large ribosomal subunit protein uL29 from Desulforamulus reducens (strain ATCC BAA-1160 / DSM 100696 / MI-1) (Desulfotomaculum reducens).